The sequence spans 312 residues: Deoxycytidylate deaminase (312 aa).

One can recognise a CMP/dCMP-type deaminase domain in the interval 162–291 (SWDSYFMKLA…RMDEESFKVL (130 aa)). Residue His233 coordinates Zn(2+). Residue Glu235 is the Proton donor of the active site. Zn(2+)-binding residues include Cys260 and Cys263.

Belongs to the cytidine and deoxycytidylate deaminase family. The cofactor is Zn(2+).

The enzyme catalyses dCMP + H2O + H(+) = dUMP + NH4(+). With respect to regulation, allosteric enzyme whose activity is greatly influenced by the end products of its metabolic pathway, dCTP and dTTP. Its function is as follows. Catalyzes the hydrolytic deamination of dCMP to yield dUMP, the nucleotide substrate for thymidylate synthetase. The polypeptide is Deoxycytidylate deaminase (Saccharomyces cerevisiae (strain ATCC 204508 / S288c) (Baker's yeast)).